Here is a 397-residue protein sequence, read N- to C-terminus: Major outer membrane porin, serovar L3 (397 aa).

A signal peptide spans 1-22 (MKKLLKSVLVFAALSSASSLQA).

It belongs to the chlamydial porin (CP) (TC 1.B.2) family. As to quaternary structure, part of a disulfide cross-linked outer membrane complex (COMC) composed of the major outer membrane porin (MOMP), the small cysteine-rich protein (OmcA) and the large cysteine-rich periplasmic protein (OmcB).

The protein localises to the cell outer membrane. Its function is as follows. In elementary bodies (EBs, the infectious stage, which is able to survive outside the host cell) provides the structural integrity of the outer envelope through disulfide cross-links with the small cysteine-rich protein and the large cysteine-rich periplasmic protein. It has been described in publications as the Sarkosyl-insoluble COMC (Chlamydia outer membrane complex), and serves as the functional equivalent of peptidoglycan. Permits diffusion of specific solutes through the outer membrane. This is Major outer membrane porin, serovar L3 (ompA) from Chlamydia trachomatis.